The following is a 1294-amino-acid chain: CLIP-associating protein 2 (1294 aa).

A disordered region spans residues 1 to 61; sequence MAMGDDKSFD…KVGGASKEGG (61 aa). Ser-8 and Ser-14 each carry phosphoserine. Residues 47 to 61 show a composition bias toward gly residues; it reads SAGGPKVGGASKEGG. The interval 60–311 is TOG 1; sequence GGAGAVDEDD…KSLQTYLKSS (252 aa). 3 HEAT repeats span residues 173–208, 209–245, and 250–287; these read HGAE…IRHT, HVPR…EWQT, and RHAA…HFPG. The segment at 314-368 is disordered; sequence VASLPQSDRSSSSSQESLNRPFSSKWSTANPSTVAGRVSAGSSKASSLPGSLQRS. 3 positions are modified to phosphoserine: Ser-316, Ser-327, and Ser-330. A compositionally biased stretch (low complexity) spans 316–334; sequence SLPQSDRSSSSSQESLNRP. Polar residues-rich tracts occupy residues 335–346 and 353–367; these read FSSKWSTANPST and AGSS…SLQR. Phosphoserine occurs at positions 360, 368, 370, and 407. The interval 409-467 is disordered; sequence EDTSDKLDGTASEDGRVRAKLSAPLAGMGNAKADSRGRSRTKMVSQSQPGSRSGSPGRV. Residues 411-425 are compositionally biased toward basic and acidic residues; sequence TSDKLDGTASEDGRV. An interaction with microtubules, MAPRE1 and MAPRE3 region spans residues 444 to 580; the sequence is RGRSRTKMVS…GPGYGISQSS (137 aa). The segment covering 453-467 has biased composition (low complexity); sequence SQSQPGSRSGSPGRV. Phosphoserine occurs at positions 455, 459, 463, 478, and 489. The segment at 488–557 is disordered; it reads ASAQKRSKIP…PLASRHHSRS (70 aa). Positions 494 to 497 match the SXIP motif 1; mediates interaction with MAPRE1 and targeting to microtubule plus ends motif; it reads SKIP. Ser-507 carries the post-translational modification Phosphoserine. The SXIP motif 2; mediates interaction with MAPRE1 and targeting to microtubule plus ends motif lies at 517–520; it reads SRIP. Phosphoserine occurs at positions 525, 529, 585, 587, 596, 621, and 627. The tract at residues 617–645 is disordered; the sequence is YGMHSDDDANSDASSACSERSYSSRNGSI. The span at 627–641 shows a compositional bias: low complexity; sequence SDASSACSERSYSSR. The segment at 649–881 is TOG 2; sequence MRQTEDVAEV…TKLLHNHLRN (233 aa). HEAT repeat units follow at residues 710–747 and 772–809; these read RVFS…KMGA and LQFN…QMDP. A Phosphothreonine modification is found at Thr-787. An interaction with RSN and localization to the Golgi and kinetochores region spans residues 872–1294; that stretch reads TKLLHNHLRN…DPTTDVSGQS (423 aa). Disordered stretches follow at residues 878 to 928 and 952 to 995; these read HLRN…FDYD and SFRS…DSSQ. 2 stretches are compositionally biased toward polar residues: residues 880–892 and 901–922; these read RNTG…SMGS and SPAN…TLSP. Ser-892 is subject to Phosphoserine. Ser-952, Ser-955, Ser-1013, and Ser-1029 each carry phosphoserine. Residues 955 to 972 are compositionally biased toward basic and acidic residues; it reads SQEDMNEPLKRDSKKDDG. A required for cortical localization region spans residues 1017-1294; sequence RDYNPYNYSD…DPTTDVSGQS (278 aa). 3 HEAT repeats span residues 1054 to 1091, 1098 to 1135, and 1216 to 1253; these read LDHS…TQEE, EHFK…HQPA, and LLLP…VIGD.

The protein belongs to the CLASP family. In terms of assembly, interacts with microtubules. Interacts with MAPRE1; probably required for targeting to the growing microtubule plus ends. Interacts with CLIP2, ERC1, MAPRE3, PHLDB2 and RSN. The interaction with ERC1 may be mediated by PHLDB2. Interacts with GCC2; recruits CLASP2 to Golgi membranes. Interacts with MACF1. Interacts with mtcl2 and MTCL1. Post-translationally, phosphorylated by GSK3B. Phosphorylation reduces MAPRE1 binding. Phosphorylation by GSK3B may negatively regulate binding to microtubule lattices in lamella. Brain-specific.

The protein resides in the cytoplasm. Its subcellular location is the cytoskeleton. It is found in the microtubule organizing center. The protein localises to the centrosome. It localises to the chromosome. The protein resides in the centromere. Its subcellular location is the kinetochore. It is found in the spindle. The protein localises to the golgi apparatus. It localises to the trans-Golgi network. The protein resides in the cell membrane. Its subcellular location is the cell projection. It is found in the ruffle membrane. The protein localises to the cell cortex. Its function is as follows. Microtubule plus-end tracking protein that promotes the stabilization of dynamic microtubules. Involved in the nucleation of noncentrosomal microtubules originating from the trans-Golgi network (TGN). Required for the polarization of the cytoplasmic microtubule arrays in migrating cells towards the leading edge of the cell. May act at the cell cortex to enhance the frequency of rescue of depolymerizing microtubules by attaching their plus-ends to cortical platforms composed of ERC1 and PHLDB2. This cortical microtubule stabilizing activity is regulated at least in part by phosphatidylinositol 3-kinase signaling. Also performs a similar stabilizing function at the kinetochore which is essential for the bipolar alignment of chromosomes on the mitotic spindle. Acts as a mediator of ERBB2-dependent stabilization of microtubules at the cell cortex. The sequence is that of CLIP-associating protein 2 (CLASP2) from Homo sapiens (Human).